The following is a 550-amino-acid chain: Methionine--tRNA ligase (550 aa).

Residues 12–22 (PYANGPLHFGH) carry the 'HIGH' region motif. Zn(2+) is bound by residues C144, C147, C157, and C160. The 'KMSKS' region motif lies at 330–334 (QFSKS). K333 serves as a coordination point for ATP.

It belongs to the class-I aminoacyl-tRNA synthetase family. MetG type 1 subfamily. In terms of assembly, monomer. It depends on Zn(2+) as a cofactor.

Its subcellular location is the cytoplasm. The enzyme catalyses tRNA(Met) + L-methionine + ATP = L-methionyl-tRNA(Met) + AMP + diphosphate. In terms of biological role, is required not only for elongation of protein synthesis but also for the initiation of all mRNA translation through initiator tRNA(fMet) aminoacylation. The chain is Methionine--tRNA ligase from Chlamydia caviae (strain ATCC VR-813 / DSM 19441 / 03DC25 / GPIC) (Chlamydophila caviae).